We begin with the raw amino-acid sequence, 910 residues long: 2-oxoglutarate dehydrogenase E1 component (910 aa).

This sequence belongs to the alpha-ketoglutarate dehydrogenase family. As to quaternary structure, homodimer. Part of the 2-oxoglutarate dehydrogenase (OGDH) complex composed of E1 (2-oxoglutarate dehydrogenase), E2 (dihydrolipoamide succinyltransferase) and E3 (dihydrolipoamide dehydrogenase); the complex contains multiple copies of the three enzymatic components (E1, E2 and E3). Thiamine diphosphate serves as cofactor.

It catalyses the reaction N(6)-[(R)-lipoyl]-L-lysyl-[protein] + 2-oxoglutarate + H(+) = N(6)-[(R)-S(8)-succinyldihydrolipoyl]-L-lysyl-[protein] + CO2. Functionally, E1 component of the 2-oxoglutarate dehydrogenase (OGDH) complex which catalyzes the decarboxylation of 2-oxoglutarate, the first step in the conversion of 2-oxoglutarate to succinyl-CoA and CO(2). This is 2-oxoglutarate dehydrogenase E1 component from Staphylococcus aureus (strain N315).